Consider the following 167-residue polypeptide: Ubiquitin-fold modifier-conjugating enzyme 1 (167 aa).

The Glycyl thioester intermediate role is filled by Cys116.

It belongs to the ubiquitin-conjugating enzyme family. UFC1 subfamily. Interacts with UBA5 (via C-terminus). Interacts with UFL1. Interacts with UFM1.

Functionally, E2-like enzyme which specifically catalyzes the second step in ufmylation. Accepts the ubiquitin-like modifier UFM1 from the E1 enzyme UBA5 and forms an intermediate with UFM1 via a thioester linkage. Ufmylation is involved in various processes, such as ribosome recycling, response to DNA damage, interferon response or reticulophagy (also called ER-phagy). The polypeptide is Ubiquitin-fold modifier-conjugating enzyme 1 (Esox lucius (Northern pike)).